The chain runs to 430 residues: Trigger factor (430 aa).

One can recognise a PPIase FKBP-type domain in the interval G157 to P242.

The protein belongs to the FKBP-type PPIase family. Tig subfamily.

It is found in the cytoplasm. The catalysed reaction is [protein]-peptidylproline (omega=180) = [protein]-peptidylproline (omega=0). In terms of biological role, involved in protein export. Acts as a chaperone by maintaining the newly synthesized protein in an open conformation. Functions as a peptidyl-prolyl cis-trans isomerase. The sequence is that of Trigger factor from Xanthomonas campestris pv. campestris (strain ATCC 33913 / DSM 3586 / NCPPB 528 / LMG 568 / P 25).